A 349-amino-acid chain; its full sequence is UDP-N-acetylenolpyruvoylglucosamine reductase (349 aa).

The FAD-binding PCMH-type domain occupies 25 to 197 (GIAATARYAA…VAVTFRLPKR (173 aa)). Residue R173 is part of the active site. The active-site Proton donor is S249. Residue E345 is part of the active site.

The protein belongs to the MurB family. It depends on FAD as a cofactor.

It localises to the cytoplasm. It catalyses the reaction UDP-N-acetyl-alpha-D-muramate + NADP(+) = UDP-N-acetyl-3-O-(1-carboxyvinyl)-alpha-D-glucosamine + NADPH + H(+). The protein operates within cell wall biogenesis; peptidoglycan biosynthesis. In terms of biological role, cell wall formation. The protein is UDP-N-acetylenolpyruvoylglucosamine reductase of Burkholderia vietnamiensis (strain G4 / LMG 22486) (Burkholderia cepacia (strain R1808)).